A 429-amino-acid chain; its full sequence is MQYVMGRTNSMTRGFLNKRRVLEKCRTAKQKIHYCISRYFHYLPPVLAILLPIGSWPFLSEQQWWYGSFLFPVVSSLGWLFAIGRRERQLRAAAGQLLEAKIRKLTEQDEGLKNIRETIEKRQKETDRLKLHNDKLVEQLGQAREVFIQAKGRYDHMEELSRRLKEENQQLQIQLEAAVRERNEKILENQELLQELKETLAYQQELHDEYQATFVEQHSMLDKRQAYIGNLEAKVQDLMCELRNLLQLEMGAKTNLPGKPVASRDVVAQLVLEFRKIVFRVETTEAADSLTALRYTRTDPSAHNYSLACRQLFDGLREENLGMLFIYAPFAQRVLFANALFNDWTGYGLEDFLNRESDVVLEGFAQWERDLLTESRVERSGKIVIKTKAFGATPFYYCVVTLDKGPFAQHILGVLYPAKASFFTNLSYI.

Belongs to the UPF0242 family.

This chain is UPF0242 protein CT_616, found in Chlamydia trachomatis serovar D (strain ATCC VR-885 / DSM 19411 / UW-3/Cx).